Consider the following 43-residue polypeptide: uncharacterized protein (43 aa).

The signal sequence occupies residues 1-17 (MYRRLLLNLFCMVFLQA).

This is an uncharacterized protein from Helicobacter pylori (strain J99 / ATCC 700824) (Campylobacter pylori J99).